A 184-amino-acid polypeptide reads, in one-letter code: Photosystem I assembly protein Ycf4 (184 aa).

2 helical membrane passes run 21 to 43 (NFCW…ISSY) and 63 to 85 (GLVM…CAIS).

The protein belongs to the Ycf4 family.

Its subcellular location is the plastid. It localises to the chloroplast thylakoid membrane. Its function is as follows. Seems to be required for the assembly of the photosystem I complex. The protein is Photosystem I assembly protein Ycf4 of Spinacia oleracea (Spinach).